Reading from the N-terminus, the 132-residue chain is DNA-packaging protein FI (132 aa).

Residues 81 to 132 (ELVTVVALVKLHTDALHATRDEPVAFVLPGTAFRVSAGVAAEMTERGLARMQ) are capsid binding.

In terms of assembly, interacts with major capsid protein via c-terminus.

It is found in the host cytoplasm. Functionally, stimulates the interaction of procapsid with the terminase-DNA complex, thereby increasing the overall rate of DNA packaging. Before packaging, it likely coats the surface of the procapsid through binding mediated by C-terminal domain. FI presumably dissociates from the capsid once it inflates upon DNA packaging, and is not present in the mature virion. In Escherichia coli (Bacteriophage lambda), this protein is DNA-packaging protein FI (Fi).